The primary structure comprises 258 residues: tRNA pseudouridine synthase A (258 aa).

The active-site Nucleophile is aspartate 53. Position 111 (tyrosine 111) interacts with substrate.

It belongs to the tRNA pseudouridine synthase TruA family. As to quaternary structure, homodimer.

It catalyses the reaction uridine(38/39/40) in tRNA = pseudouridine(38/39/40) in tRNA. Its function is as follows. Formation of pseudouridine at positions 38, 39 and 40 in the anticodon stem and loop of transfer RNAs. The sequence is that of tRNA pseudouridine synthase A from Streptococcus agalactiae serotype Ia (strain ATCC 27591 / A909 / CDC SS700).